A 1302-amino-acid chain; its full sequence is DNA-directed RNA polymerase subunit beta (1302 aa).

The protein belongs to the RNA polymerase beta chain family. The RNAP catalytic core consists of 2 alpha, 1 beta, 1 beta' and 1 omega subunit. When a sigma factor is associated with the core the holoenzyme is formed, which can initiate transcription.

The catalysed reaction is RNA(n) + a ribonucleoside 5'-triphosphate = RNA(n+1) + diphosphate. In terms of biological role, DNA-dependent RNA polymerase catalyzes the transcription of DNA into RNA using the four ribonucleoside triphosphates as substrates. The polypeptide is DNA-directed RNA polymerase subunit beta (Spiroplasma citri).